Consider the following 274-residue polypeptide: Diaminopimelate epimerase (274 aa).

Asn-11, Gln-44, and Asn-64 together coordinate substrate. Cys-73 serves as the catalytic Proton donor. Substrate contacts are provided by residues 74–75, Asn-157, Asn-190, and 208–209; these read GN and ER. Cys-217 acts as the Proton acceptor in catalysis. 218 to 219 contacts substrate; the sequence is GS.

It belongs to the diaminopimelate epimerase family. In terms of assembly, homodimer.

It is found in the cytoplasm. It catalyses the reaction (2S,6S)-2,6-diaminopimelate = meso-2,6-diaminopimelate. Its pathway is amino-acid biosynthesis; L-lysine biosynthesis via DAP pathway; DL-2,6-diaminopimelate from LL-2,6-diaminopimelate: step 1/1. Catalyzes the stereoinversion of LL-2,6-diaminopimelate (L,L-DAP) to meso-diaminopimelate (meso-DAP), a precursor of L-lysine and an essential component of the bacterial peptidoglycan. The protein is Diaminopimelate epimerase of Serratia proteamaculans (strain 568).